The following is a 123-amino-acid chain: uncharacterized protein (123 aa).

This is an uncharacterized protein from Bacillus subtilis (strain 168).